The sequence spans 101 residues: MFAIVKTGGKQYRVEPGLKLRVEKLDAEPGATVELPVLLLGGEKTVVGTPVVEGASVVAEVLGHGRGKKILVSKFKAKVQYRRKKGHRQPYTELLIKEIRG.

The protein belongs to the bacterial ribosomal protein bL21 family. In terms of assembly, part of the 50S ribosomal subunit. Contacts protein L20.

Functionally, this protein binds to 23S rRNA in the presence of protein L20. This chain is Large ribosomal subunit protein bL21, found in Thermus thermophilus (strain ATCC BAA-163 / DSM 7039 / HB27).